The primary structure comprises 274 residues: MSLQHIIEAAFEKRAEITPKTVDAQTRAAIEEAIEGLDSGKYRVAEKIDGEWVTHQWLKKAVLLSFRINDNELVAGSETNYYDKVPMKFAEYDAARFQQEGFRVVPPAAVRKGAYIAKNTVLMPSYVNIGARVDEGTMVDTWATVGSCAQIGKNVHLSGGVGIGGVLEPLQANPTIIEDNCFIGARSEIVEGVIVEEGSVISMGVFIGQSTKIYDRETGEVTYGRVPAGSVVVSGSLPSKCGKYSLYCAVIVKKVDAKTLGKVGINELLRTIDE.

Positions 103 and 140 each coordinate substrate.

Belongs to the transferase hexapeptide repeat family. In terms of assembly, homotrimer.

The protein localises to the cytoplasm. The catalysed reaction is (S)-2,3,4,5-tetrahydrodipicolinate + succinyl-CoA + H2O = (S)-2-succinylamino-6-oxoheptanedioate + CoA. The protein operates within amino-acid biosynthesis; L-lysine biosynthesis via DAP pathway; LL-2,6-diaminopimelate from (S)-tetrahydrodipicolinate (succinylase route): step 1/3. In Pasteurella multocida (strain Pm70), this protein is 2,3,4,5-tetrahydropyridine-2,6-dicarboxylate N-succinyltransferase.